The primary structure comprises 259 residues: Proteasome subunit alpha 1 (259 aa).

The tract at residues 231 to 259 (LVPAEPAAASESAPEPKPDTETKPADTQD) is disordered. Low complexity predominate over residues 233–243 (PAEPAAASESA). Residues 244–259 (PEPKPDTETKPADTQD) are compositionally biased toward basic and acidic residues.

This sequence belongs to the peptidase T1A family. As to quaternary structure, the 20S proteasome core is composed of 14 alpha and 14 beta subunits that assemble into four stacked heptameric rings, resulting in a barrel-shaped structure. The two inner rings, each composed of seven catalytic beta subunits, are sandwiched by two outer rings, each composed of seven alpha subunits. All four combinations of alpha- and beta-subunits (beta2-alpha1, beta2-alpha2, beta1-alpha2 and beta1-alpha1) yield fully assembled and proteolytically active proteasomes. The catalytic chamber with the active sites is on the inside of the barrel. Has probably a gated structure, the ends of the cylinder being occluded by the N-termini of the alpha-subunits. Is likely capped by the proteasome-associated ATPase, ARC. Post-translationally, the N-terminus is blocked.

Its subcellular location is the cytoplasm. The protein operates within protein degradation; proteasomal Pup-dependent pathway. The formation of the proteasomal ATPase ARC-20S proteasome complex, likely via the docking of the C-termini of ARC into the intersubunit pockets in the alpha-rings, may trigger opening of the gate for substrate entry. Interconversion between the open-gate and close-gate conformations leads to a dynamic regulation of the 20S proteasome proteolysis activity. Its function is as follows. Component of the proteasome core, a large protease complex with broad specificity involved in protein degradation. The R.erythropolis proteasomes are able to cleave oligopeptides after Tyr, Phe and Leu, very poorly after Arg but not after Glu. Thus, displays chymotrypsin-like activity, low trypsin-like activity but no caspase-like activity. This chain is Proteasome subunit alpha 1, found in Rhodococcus erythropolis (Arthrobacter picolinophilus).